Consider the following 104-residue polypeptide: Colipase-like protein 2 (104 aa).

The N-terminal stretch at 1–19 (MAFTQALVTVLAFLVGTLP) is a signal peptide. Intrachain disulfides connect Cys38-Cys49, Cys44-Cys60, Cys48-Cys82, Cys70-Cys90, and Cys84-Cys101.

It belongs to the colipase family.

It localises to the secreted. The sequence is that of Colipase-like protein 2 (Clpsl2) from Rattus norvegicus (Rat).